The primary structure comprises 375 residues: Alpha-2,8-sialyltransferase 8B (375 aa).

The Cytoplasmic segment spans residues 1 to 6; that stretch reads MQLQFR. The chain crosses the membrane as a helical; Signal-anchor for type II membrane protein span at residues 7 to 23; it reads SWMLAALTLLVVFLIFA. Topologically, residues 24–375 are lumenal; sequence DISEIEEEIG…LTVGQCDGAT (352 aa). Residues asparagine 60, asparagine 72, asparagine 89, and asparagine 134 are each glycosylated (N-linked (GlcNAc...) asparagine). Cystine bridges form between cysteine 157/cysteine 307 and cysteine 171/cysteine 371. CMP-N-acetyl-beta-neuraminate contacts are provided by asparagine 162 and asparagine 185. N-linked (GlcNAc...) asparagine glycosylation is found at asparagine 219 and asparagine 234. 6 residues coordinate CMP-N-acetyl-beta-neuraminate: threonine 294, threonine 295, glycine 296, tryptophan 316, tyrosine 329, and histidine 330. Histidine 346 acts as the Proton donor/acceptor in catalysis.

It belongs to the glycosyltransferase 29 family. Post-translationally, autopolysialylated. Autopolysialylation is not a prerequisite for the polysialylation acitity, but enhances the polysialylation acitity. As to expression, expressed only in newborn brain.

The protein localises to the golgi apparatus membrane. It is found in the secreted. Its subcellular location is the cell membrane. The catalysed reaction is [N-acetyl-alpha-D-neuraminosyl-(2-&gt;8)](n) + CMP-N-acetyl-beta-neuraminate = [N-acetyl-alpha-D-neuraminosyl-(2-&gt;8)](n+1) + CMP + H(+). The protein operates within protein modification; protein glycosylation. Its function is as follows. Catalyzes the transfer of a sialic acid from a CMP-linked sialic acid donor onto a terminal alpha-2,3-, alpha-2,6-, or alpha-2,8-linked sialic acid of an N-linked glycan acceptor through alpha-2,8-linkages. Therefore, participates in polysialic acid synthesis on various sialylated N-acetyllactosaminyl oligosaccharides (alpha-2,3-, alpha-2,6-, or alpha-2,8-linked sialic acid), including NCAM1, NCAM1 N-glycans, FETUB N-glycans, and to a lesser extent sialylparagloboside (SPG) and AHSG, which does not require the initial addition of an alpha 2,8-sialic acid. However, does not exhibit sialic acid-polymerase activity. Catalyzes polysialic acid synthesis in the hippocampal on NCAM1 and supports neurite outgrowth. ST8SIA2-mediated polysialylation influences on oligodendrocyte differentiation and may promote the integrity of myelin and axons. The protein is Alpha-2,8-sialyltransferase 8B of Rattus norvegicus (Rat).